A 470-amino-acid polypeptide reads, in one-letter code: Properdin (470 aa).

A signal peptide spans 1–26 (MTAPVQVPQSLLLLLMLLLTLPATGS). TSP type-1 domains follow at residues 27-75 (DPVL…QACR), 76-133 (SPRW…QCCP), 135-190 (MGGW…QVCP), 192-254 (HGAW…PPCP), 256-312 (AGGW…VPCP), 314-376 (DGEW…QNCI), and 380-463 (KGSW…PACK). 3 disulfide bridges follow: cysteine 31/cysteine 55, cysteine 42/cysteine 71, and cysteine 56/cysteine 74. Residues tryptophan 82 and tryptophan 85 are each glycosylated (C-linked (Man) tryptophan). 7 disulfides stabilise this stretch: cysteine 88-cysteine 126, cysteine 92-cysteine 132, cysteine 103-cysteine 110, cysteine 131-cysteine 169, cysteine 147-cysteine 183, cysteine 151-cysteine 189, and cysteine 162-cysteine 173. Residues tryptophan 138, tryptophan 141, and tryptophan 144 are each glycosylated (C-linked (Man) tryptophan). Threonine 150 carries an O-linked (Fuc...) threonine glycan. Tryptophan 195, tryptophan 198, and tryptophan 201 each carry a C-linked (Man) tryptophan glycan. 3 disulfide bridges follow: cysteine 204–cysteine 247, cysteine 208–cysteine 253, and cysteine 223–cysteine 237. O-linked (Fuc...) serine glycosylation is present at serine 207. 2 C-linked (Man) tryptophan glycosylation sites follow: tryptophan 259 and tryptophan 262. Cystine bridges form between cysteine 268–cysteine 305, cysteine 272–cysteine 311, and cysteine 283–cysteine 295. An O-linked (Fuc...) threonine glycan is attached at threonine 271. 2 C-linked (Man) tryptophan glycosylation sites follow: tryptophan 320 and tryptophan 323. 3 cysteine pairs are disulfide-bonded: cysteine 326/cysteine 369, cysteine 336/cysteine 375, and cysteine 349/cysteine 359. Positions 350–358 (KGRKFNGQR) are interaction with Complement C3 beta chain. C-linked (Man) tryptophan glycans are attached at residues tryptophan 383, tryptophan 386, and tryptophan 389. Disulfide bonds link cysteine 392–cysteine 456, cysteine 396–cysteine 462, and cysteine 408–cysteine 440. N-linked (GlcNAc...) asparagine glycosylation occurs at asparagine 429.

In terms of assembly, in plasma, properdin exists as dimers, trimers or tetramers in the relative proportions of 26:54:20. Interacts with the pro-C3-convertase enzyme complex (C3b-Bb) comprised of Complement C3 beta chain (C3b) and the Complement factor B Bb fragment (Bb), where it binds (via its TSP type-1 5 domain) with C3b and Bb. This interaction stabilizes the complex and allows it to become the active C3-convertase enzyme complex (C3b-Bb-FP). Interacts with C3b. Interacts with CFB.

Its subcellular location is the secreted. Its function is as follows. A positive regulator of the alternate pathway of complement. It binds to and stabilizes the C3- and C5-convertase enzyme complexes. Inhibits CFI-CFH mediated degradation of Inhibits CFI-CFH mediated degradation of Complement C3 beta chain (C3b). The protein is Properdin (CFP) of Cavia porcellus (Guinea pig).